Here is a 274-residue protein sequence, read N- to C-terminus: Adenosylcobinamide-GDP ribazoletransferase (274 aa).

7 consecutive transmembrane segments (helical) span residues 46–66 (VMASVPFIGIVLGIVGGAIAF), 69–89 (TSLGVASIVAATVIVCFWELF), 117–137 (IIADPATGLIGMGACLISILI), 151–173 (WWMVMITPMIGRFCAIFGAHSRL), 192–212 (HTIIAWLCVLLVICIGVPLAM), 216–236 (ELITITILGLLCSVTLALVEI), and 253–273 (FIMHSATALCALVFAVGVGIV).

The protein belongs to the CobS family. Requires Mg(2+) as cofactor.

The protein resides in the cell membrane. The enzyme catalyses alpha-ribazole + adenosylcob(III)inamide-GDP = adenosylcob(III)alamin + GMP + H(+). The catalysed reaction is alpha-ribazole 5'-phosphate + adenosylcob(III)inamide-GDP = adenosylcob(III)alamin 5'-phosphate + GMP + H(+). It participates in cofactor biosynthesis; adenosylcobalamin biosynthesis; adenosylcobalamin from cob(II)yrinate a,c-diamide: step 7/7. In terms of biological role, joins adenosylcobinamide-GDP and alpha-ribazole to generate adenosylcobalamin (Ado-cobalamin). Also synthesizes adenosylcobalamin 5'-phosphate from adenosylcobinamide-GDP and alpha-ribazole 5'-phosphate. This is Adenosylcobinamide-GDP ribazoletransferase from Corynebacterium diphtheriae (strain ATCC 700971 / NCTC 13129 / Biotype gravis).